We begin with the raw amino-acid sequence, 171 residues long: S-ribosylhomocysteine lyase (171 aa).

Residues H54, H58, and C128 each coordinate Fe cation.

The protein belongs to the LuxS family. In terms of assembly, homodimer. Fe cation is required as a cofactor.

The catalysed reaction is S-(5-deoxy-D-ribos-5-yl)-L-homocysteine = (S)-4,5-dihydroxypentane-2,3-dione + L-homocysteine. In terms of biological role, involved in the synthesis of autoinducer 2 (AI-2) which is secreted by bacteria and is used to communicate both the cell density and the metabolic potential of the environment. The regulation of gene expression in response to changes in cell density is called quorum sensing. Catalyzes the transformation of S-ribosylhomocysteine (RHC) to homocysteine (HC) and 4,5-dihydroxy-2,3-pentadione (DPD). This chain is S-ribosylhomocysteine lyase, found in Salmonella arizonae (strain ATCC BAA-731 / CDC346-86 / RSK2980).